The chain runs to 618 residues: Ubiquitin carboxyl-terminal hydrolase 2 (618 aa).

The interval 1 to 213 is necessary for interaction with MDM4; sequence MSQLSSTLKR…RSEYLTDYLE (213 aa). Disordered stretches follow at residues 54-112 and 246-274; these read VSPT…GGSG and RYTLWEKNKGQASGPSRSTSPGRDTMNSK. A compositionally biased stretch (basic and acidic residues) spans 90 to 100; it reads KRSESQTRGNE. Residues 255 to 274 are compositionally biased toward polar residues; that stretch reads GQASGPSRSTSPGRDTMNSK. A USP domain is found at 280–612; it reads AGLRNLGNTC…DAYLLFYELA (333 aa). Cys289 (nucleophile) is an active-site residue. Positions 416-516 are necessary for interaction with MDM4; that stretch reads YLEREDSRIG…FPKILVLHLK (101 aa). Zn(2+)-binding residues include Cys438, Cys441, Cys489, and Cys492. His570 acts as the Proton acceptor in catalysis.

This sequence belongs to the peptidase C19 family. USP2 subfamily. Homooligomer. Found in trimeric complex with MDM2 and MDM4 and USP2. Interacts with CCND1; the interaction is direct and promotes its stabilization by antagonizing ubiquitin-dependent degradation. Interacts (via N-terminus and C-terminus) with MDM2. Interacts with MDM4. Interacts with PER1. Interacts with KCNQ1; counteracts the NEDD4L-specific down-regulation of I(Ks) and restores plasma membrane localization of KCNQ1. Isoform 4: Interacts with NHERF4 and CLTC. Expressed in mesangial cells of the kidney. Isoform 1 and isoform 2 are expressed in elongated spermatids; the shorter form appearing earlier than the longer form (at protein level). Isoform 1 and isoform 2 are expressed in early round spermatids of the testis. Isoform 1 is expressed in muscle and heart. Isoform 2 is expressed in muscle, lung, heart, brain, liver and ovary. During muscle differentiation, isoform 1 expression increases before the onset of membrane fusion and decreases as the myogenic processes proceeded; un counterpart, isoform 2 expression remains low until the burst of membrane fusion but increases thereafter.

It localises to the cytoplasm. It is found in the perinuclear region. The protein resides in the nucleus. Its subcellular location is the membrane. It catalyses the reaction Thiol-dependent hydrolysis of ester, thioester, amide, peptide and isopeptide bonds formed by the C-terminal Gly of ubiquitin (a 76-residue protein attached to proteins as an intracellular targeting signal).. Cleavage is inhibited by ubiquitin in a dosage-dependent manner. Cleavage is blocked by ubiquitin aldehyde. Hydrolase that deubiquitinates polyubiquitinated target proteins such as MDM2, MDM4 and CCND1. Isoform 1 and isoform 2 possess both ubiquitin-specific peptidase and isopeptidase activities. Deubiquitinates MDM2 without reversing MDM2-mediated p53/TP53 ubiquitination and thus indirectly promotes p53/TP53 degradation and limits p53 activity. Has no deubiquitinase activity against p53/TP53. Prevents MDM2-mediated degradation of MDM4. Plays a role in the G1/S cell-cycle progression in normal and cancer cells. Regulates the circadian clock by modulating its intrinsic circadian rhythm and its capacity to respond to external cues. Associates with clock proteins and deubiquitinates core clock component PER1 but does not affect its overall stability. Regulates the nucleocytoplasmic shuttling and nuclear retention of PER1 and its repressive role on the clock transcription factors CLOCK and BMAL1. Plays a role in the regulation of myogenic differentiation of embryonic muscle cells. Its function is as follows. Circadian clock output effector that regulates Ca(2+) absorption in the small intestine. Probably functions by regulating protein levels of the membrane scaffold protein NHERF4 in a rhythmic manner, and is therefore likely to control Ca(2+) membrane permeability mediated by the Ca(2+) channel TRPV6 in the intestine. In Rattus norvegicus (Rat), this protein is Ubiquitin carboxyl-terminal hydrolase 2 (Usp2).